The sequence spans 263 residues: Phosphatidylserine decarboxylase proenzyme (263 aa).

Active-site charge relay system; for autoendoproteolytic cleavage activity residues include Asp90, His146, and Ser230. The active-site Schiff-base intermediate with substrate; via pyruvic acid; for decarboxylase activity is Ser230. Ser230 is subject to Pyruvic acid (Ser); by autocatalysis.

Belongs to the phosphatidylserine decarboxylase family. PSD-B subfamily. Prokaryotic type I sub-subfamily. Heterodimer of a large membrane-associated beta subunit and a small pyruvoyl-containing alpha subunit. The cofactor is pyruvate. Is synthesized initially as an inactive proenzyme. Formation of the active enzyme involves a self-maturation process in which the active site pyruvoyl group is generated from an internal serine residue via an autocatalytic post-translational modification. Two non-identical subunits are generated from the proenzyme in this reaction, and the pyruvate is formed at the N-terminus of the alpha chain, which is derived from the carboxyl end of the proenzyme. The autoendoproteolytic cleavage occurs by a canonical serine protease mechanism, in which the side chain hydroxyl group of the serine supplies its oxygen atom to form the C-terminus of the beta chain, while the remainder of the serine residue undergoes an oxidative deamination to produce ammonia and the pyruvoyl prosthetic group on the alpha chain. During this reaction, the Ser that is part of the protease active site of the proenzyme becomes the pyruvoyl prosthetic group, which constitutes an essential element of the active site of the mature decarboxylase.

The protein localises to the cell membrane. The enzyme catalyses a 1,2-diacyl-sn-glycero-3-phospho-L-serine + H(+) = a 1,2-diacyl-sn-glycero-3-phosphoethanolamine + CO2. It participates in phospholipid metabolism; phosphatidylethanolamine biosynthesis; phosphatidylethanolamine from CDP-diacylglycerol: step 2/2. In terms of biological role, catalyzes the formation of phosphatidylethanolamine (PtdEtn) from phosphatidylserine (PtdSer). The chain is Phosphatidylserine decarboxylase proenzyme from Bacillus subtilis (strain 168).